The chain runs to 321 residues: NADPH-dependent codeinone reductase 1-3 (321 aa).

NADPH is bound by residues Thr27 and Asp51. Catalysis depends on proton donor residues Tyr56 and His119. His119 provides a ligand contact to substrate. Positions 187, 214, 216, 264, and 269 each coordinate NADPH. Residues Ala300–Asp321 form a disordered region.

Belongs to the aldo/keto reductase family. In terms of tissue distribution, latex secreting cells (laticifer cells). Expressed constitutively in all organs with highest levels in capsules. Restricted to the parietal region of sieve elements adjacent or proximal to laticifers in roots, stems, leaves and carpels.

The protein resides in the cytoplasm. It is found in the cytosol. The catalysed reaction is codeine + NADP(+) = codeinone + NADPH + H(+). The enzyme catalyses neopine + NADP(+) = neopinone + NADPH + H(+). It carries out the reaction morphine + NADP(+) = morphinone + NADPH + H(+). It catalyses the reaction neomorphine + NADP(+) = neomorphinone + NADPH + H(+). Its pathway is alkaloid biosynthesis; morphine biosynthesis. Functionally, NADPH-dependent codeinone reductase involved in biosynthesis of morphinan-type benzylisoquinoline and opiate alkaloids natural products. Reduces codeinone to codeine in the penultimate step in morphine biosynthesis. Can use morphinone, hydrocodone and hydromorphone as substrate during reductive reaction with NADPH as cofactor, and morphine and dihydrocodeine as substrate during oxidative reaction with NADP as cofactor. Converts morphinone to morphine, and neomorphinone to neomorphine. Reduces irreversibly neopinone, a spontaneous isomer of codeinone, to neopine; in planta, neopine levels are limited to low levels. This Papaver somniferum (Opium poppy) protein is NADPH-dependent codeinone reductase 1-3.